The following is a 297-amino-acid chain: Putative S-adenosyl-L-methionine-dependent methyltransferase Mjls_1072 (297 aa).

Residues Asp124 and 153–154 contribute to the S-adenosyl-L-methionine site; that span reads DL.

It belongs to the UPF0677 family.

In terms of biological role, exhibits S-adenosyl-L-methionine-dependent methyltransferase activity. The polypeptide is Putative S-adenosyl-L-methionine-dependent methyltransferase Mjls_1072 (Mycobacterium sp. (strain JLS)).